The primary structure comprises 436 residues: Serine--tRNA ligase (436 aa).

The segment covering 43–55 (TKSEQLKQKRNEV) has biased composition (basic and acidic residues). Residues 43 to 68 (TKSEQLKQKRNEVSDQIAQAKRNKED) form a disordered region. 237–239 (TAE) lines the L-serine pocket. An ATP-binding site is contributed by 268-270 (RSE). Residue Glu-291 coordinates L-serine. Residue 355–358 (EISS) coordinates ATP. Ser-390 is an L-serine binding site.

This sequence belongs to the class-II aminoacyl-tRNA synthetase family. Type-1 seryl-tRNA synthetase subfamily. In terms of assembly, homodimer. The tRNA molecule binds across the dimer.

The protein localises to the cytoplasm. It catalyses the reaction tRNA(Ser) + L-serine + ATP = L-seryl-tRNA(Ser) + AMP + diphosphate + H(+). It carries out the reaction tRNA(Sec) + L-serine + ATP = L-seryl-tRNA(Sec) + AMP + diphosphate + H(+). It participates in aminoacyl-tRNA biosynthesis; selenocysteinyl-tRNA(Sec) biosynthesis; L-seryl-tRNA(Sec) from L-serine and tRNA(Sec): step 1/1. In terms of biological role, catalyzes the attachment of serine to tRNA(Ser). Is also able to aminoacylate tRNA(Sec) with serine, to form the misacylated tRNA L-seryl-tRNA(Sec), which will be further converted into selenocysteinyl-tRNA(Sec). This chain is Serine--tRNA ligase, found in Lactobacillus johnsonii (strain CNCM I-12250 / La1 / NCC 533).